The primary structure comprises 77 residues: Subtilisin-chymotrypsin inhibitor CI-1C (77 aa).

Belongs to the protease inhibitor I13 (potato type I serine protease inhibitor) family.

In terms of biological role, inhibits both subtilisin and chymotrypsin. This is Subtilisin-chymotrypsin inhibitor CI-1C from Hordeum vulgare (Barley).